The chain runs to 154 residues: Xanthine-guanine phosphoribosyltransferase (154 aa).

Residues 37–38 (RG), arginine 69, and 88–96 (EDLVDSGDT) each bind 5-phospho-alpha-D-ribose 1-diphosphate. Residue arginine 69 coordinates GMP. Position 89 (aspartate 89) interacts with Mg(2+). Guanine contacts are provided by aspartate 92 and isoleucine 135. Xanthine contacts are provided by aspartate 92 and isoleucine 135. Residues 92–96 (DSGDT) and 134–135 (WI) contribute to the GMP site.

This sequence belongs to the purine/pyrimidine phosphoribosyltransferase family. XGPT subfamily. In terms of assembly, homotetramer. Requires Mg(2+) as cofactor.

It localises to the cell inner membrane. It carries out the reaction GMP + diphosphate = guanine + 5-phospho-alpha-D-ribose 1-diphosphate. It catalyses the reaction XMP + diphosphate = xanthine + 5-phospho-alpha-D-ribose 1-diphosphate. The catalysed reaction is IMP + diphosphate = hypoxanthine + 5-phospho-alpha-D-ribose 1-diphosphate. It functions in the pathway purine metabolism; GMP biosynthesis via salvage pathway; GMP from guanine: step 1/1. The protein operates within purine metabolism; XMP biosynthesis via salvage pathway; XMP from xanthine: step 1/1. In terms of biological role, purine salvage pathway enzyme that catalyzes the transfer of the ribosyl-5-phosphate group from 5-phospho-alpha-D-ribose 1-diphosphate (PRPP) to the N9 position of the 6-oxopurines guanine and xanthine to form the corresponding ribonucleotides GMP (guanosine 5'-monophosphate) and XMP (xanthosine 5'-monophosphate), with the release of PPi. To a lesser extent, also acts on hypoxanthine. The sequence is that of Xanthine-guanine phosphoribosyltransferase from Vibrio campbellii (strain ATCC BAA-1116).